A 187-amino-acid chain; its full sequence is Probable chorismate pyruvate-lyase (187 aa).

Arg76, Leu114, and Glu173 together coordinate substrate.

It belongs to the UbiC family.

The protein localises to the cytoplasm. The enzyme catalyses chorismate = 4-hydroxybenzoate + pyruvate. The protein operates within cofactor biosynthesis; ubiquinone biosynthesis. Removes the pyruvyl group from chorismate, with concomitant aromatization of the ring, to provide 4-hydroxybenzoate (4HB) for the ubiquinone pathway. The sequence is that of Probable chorismate pyruvate-lyase from Shewanella amazonensis (strain ATCC BAA-1098 / SB2B).